Consider the following 565-residue polypeptide: NAD-dependent malic enzyme (565 aa).

Residue Tyr104 is the Proton donor of the active site. An NAD(+)-binding site is contributed by Arg157. Catalysis depends on Lys175, which acts as the Proton acceptor. 3 residues coordinate a divalent metal cation: Glu246, Asp247, and Asp270. 2 residues coordinate NAD(+): Asp270 and Asn418.

This sequence belongs to the malic enzymes family. Homotetramer. It depends on Mg(2+) as a cofactor. The cofactor is Mn(2+).

The catalysed reaction is (S)-malate + NAD(+) = pyruvate + CO2 + NADH. It catalyses the reaction oxaloacetate + H(+) = pyruvate + CO2. The polypeptide is NAD-dependent malic enzyme (Escherichia coli O127:H6 (strain E2348/69 / EPEC)).